A 637-amino-acid chain; its full sequence is 1-deoxy-D-xylulose-5-phosphate synthase (637 aa).

Thiamine diphosphate-binding positions include H76 and 117 to 119 (GHS). Residue D148 coordinates Mg(2+). Thiamine diphosphate is bound by residues 149–150 (GA), N177, Y294, and E381. N177 is a Mg(2+) binding site.

It belongs to the transketolase family. DXPS subfamily. As to quaternary structure, homodimer. Requires Mg(2+) as cofactor. Thiamine diphosphate serves as cofactor.

The catalysed reaction is D-glyceraldehyde 3-phosphate + pyruvate + H(+) = 1-deoxy-D-xylulose 5-phosphate + CO2. It functions in the pathway metabolic intermediate biosynthesis; 1-deoxy-D-xylulose 5-phosphate biosynthesis; 1-deoxy-D-xylulose 5-phosphate from D-glyceraldehyde 3-phosphate and pyruvate: step 1/1. Its function is as follows. Catalyzes the acyloin condensation reaction between C atoms 2 and 3 of pyruvate and glyceraldehyde 3-phosphate to yield 1-deoxy-D-xylulose-5-phosphate (DXP). The polypeptide is 1-deoxy-D-xylulose-5-phosphate synthase (Neisseria meningitidis serogroup C / serotype 2a (strain ATCC 700532 / DSM 15464 / FAM18)).